The following is a 354-amino-acid chain: Regulatory protein RapD (354 aa).

TPR repeat units follow at residues 64-105 (FENQ…VKTA), 107-126 (KHAVHHFKKAEQYLAAIHNT), 130-163 (ADLYYQTAGAYYLMKSPPLSVQYVKKALHIYLHQ), 171-204 (ITCKLLLAVNYIDQERYEKAEQLFKEIIKKTQQL), 211-244 (CHAYYNLGFLKATEKKDQEALLYFRKVLKNQEFE), and 321-353 (IEAWVDLEVLLEDITEYYKKKDDFEKAAFFIMR).

It belongs to the Rap family.

The protein localises to the cytoplasm. The chain is Regulatory protein RapD (rapD) from Bacillus subtilis (strain 168).